The primary structure comprises 312 residues: Malate dehydrogenase (312 aa).

NAD(+) contacts are provided by residues 7–13 (GAAGGIG) and aspartate 34. 2 residues coordinate substrate: arginine 81 and arginine 87. NAD(+)-binding positions include asparagine 94 and 117 to 119 (ITN). Asparagine 119 and arginine 153 together coordinate substrate. The active-site Proton acceptor is the histidine 177. Position 227 (methionine 227) interacts with NAD(+).

Belongs to the LDH/MDH superfamily. MDH type 1 family. As to quaternary structure, homodimer.

The enzyme catalyses (S)-malate + NAD(+) = oxaloacetate + NADH + H(+). Catalyzes the reversible oxidation of malate to oxaloacetate. In Salmonella choleraesuis (strain SC-B67), this protein is Malate dehydrogenase.